A 327-amino-acid polypeptide reads, in one-letter code: tRNA uridine(34) hydroxylase (327 aa).

One can recognise a Rhodanese domain in the interval 130 to 224 (LDEDTVVLDT…YGKDPEVQGE (95 aa)). Cys184 (cysteine persulfide intermediate) is an active-site residue.

It belongs to the TrhO family.

The enzyme catalyses uridine(34) in tRNA + AH2 + O2 = 5-hydroxyuridine(34) in tRNA + A + H2O. Its function is as follows. Catalyzes oxygen-dependent 5-hydroxyuridine (ho5U) modification at position 34 in tRNAs. This is tRNA uridine(34) hydroxylase from Streptococcus thermophilus (strain ATCC BAA-491 / LMD-9).